The sequence spans 366 residues: tRNA/tmRNA (uracil-C(5))-methyltransferase (366 aa).

5 residues coordinate S-adenosyl-L-methionine: Gln190, Tyr218, Asn223, Glu239, and Asp299. The active-site Nucleophile is Cys324. The Proton acceptor role is filled by Glu358.

Belongs to the class I-like SAM-binding methyltransferase superfamily. RNA M5U methyltransferase family. TrmA subfamily.

It catalyses the reaction uridine(54) in tRNA + S-adenosyl-L-methionine = 5-methyluridine(54) in tRNA + S-adenosyl-L-homocysteine + H(+). The catalysed reaction is uridine(341) in tmRNA + S-adenosyl-L-methionine = 5-methyluridine(341) in tmRNA + S-adenosyl-L-homocysteine + H(+). Dual-specificity methyltransferase that catalyzes the formation of 5-methyluridine at position 54 (m5U54) in all tRNAs, and that of position 341 (m5U341) in tmRNA (transfer-mRNA). In Klebsiella pneumoniae (strain 342), this protein is tRNA/tmRNA (uracil-C(5))-methyltransferase.